Reading from the N-terminus, the 317-residue chain is Tyrosine--tRNA ligase (317 aa).

L-tyrosine is bound at residue Y33. The 'HIGH' region signature appears at 38 to 46 (PSGKIHMGH). 4 residues coordinate L-tyrosine: Y155, Q159, D162, and Q177. The 'KMSKS' region motif lies at 211 to 215 (KMASS). S214 serves as a coordination point for ATP.

This sequence belongs to the class-I aminoacyl-tRNA synthetase family. TyrS type 3 subfamily. Homodimer.

The protein localises to the cytoplasm. The catalysed reaction is tRNA(Tyr) + L-tyrosine + ATP = L-tyrosyl-tRNA(Tyr) + AMP + diphosphate + H(+). Catalyzes the attachment of tyrosine to tRNA(Tyr) in a two-step reaction: tyrosine is first activated by ATP to form Tyr-AMP and then transferred to the acceptor end of tRNA(Tyr). In Methanosarcina mazei (strain ATCC BAA-159 / DSM 3647 / Goe1 / Go1 / JCM 11833 / OCM 88) (Methanosarcina frisia), this protein is Tyrosine--tRNA ligase.